Here is a 509-residue protein sequence, read N- to C-terminus: Putative (R)-citramalate synthase CimA (509 aa).

The Pyruvate carboxyltransferase domain occupies 14–267; that stretch reads VRIFDTTLRD…DTGIRTERLT (254 aa).

The protein belongs to the alpha-IPM synthase/homocitrate synthase family. Homodimer.

It catalyses the reaction pyruvate + acetyl-CoA + H2O = (3R)-citramalate + CoA + H(+). It functions in the pathway amino-acid biosynthesis; L-isoleucine biosynthesis; 2-oxobutanoate from pyruvate: step 1/3. Catalyzes the condensation of pyruvate and acetyl-coenzyme A to form (R)-citramalate. The protein is Putative (R)-citramalate synthase CimA (cimA) of Methanopyrus kandleri (strain AV19 / DSM 6324 / JCM 9639 / NBRC 100938).